The sequence spans 235 residues: Attacin-E (235 aa).

Residues 1–19 (MFGKIVFLLLVALCAGVQS) form the signal peptide. Positions 20–47 (RYLIVSEPVYYIEHYEEPELLASSRVRR) are excised as a propeptide.

The protein belongs to the attacin/sarcotoxin-2 family. Post-translationally, attacin F appears to be derived by proteolytic digestion of attacin E.

The protein localises to the secreted. Its function is as follows. Hemolymph antibacterial protein. This is Attacin-E from Hyalophora cecropia (Cecropia moth).